A 380-amino-acid polypeptide reads, in one-letter code: GATOR1 complex protein NPRL2 (380 aa).

The tract at residues 1-133 (MGSGCRIECI…SKQKLVPIMT (133 aa)) is interaction with PDPK1. Arg78 is a GDP binding site. An Asymmetric dimethylarginine modification is found at Arg78. Glycyl lysine isopeptide (Lys-Gly) (interchain with G-Cter in ubiquitin) cross-links involve residues Lys158 and Lys357.

It belongs to the NPR2 family. In terms of assembly, within the GATOR complex, component of the GATOR1 subcomplex, made of DEPDC5, NPRL2 and NPRL3. GATOR1 mediates the strong interaction of the GATOR complex with small GTPases Rag (RagA/RRAGA, RagB/RRAGB, RagC/RRAGC and/or RagD/RRAGD) heterodimers. GATOR1 interacts with GPR155/LYCHOS; interaction takes place in presence of cholesterol and prevents interaction between GATOR1 and KICSTOR. Interacts with PDPK1. Post-translationally, in the presence of abundant amino acids, ubiquitinated at Lys-158 and Lys-357 via 'Lys-6'-linked ubiquitination by the WDR24 component of the GATOR2 complex, thereby inhibiting the GATOR1 complex and promoting mTORC1 activation. Asymmetric dimethylation at Arg-78 by PRMT1 inhibits the GTPase activator activity of the GATOR1 complex and consequently inducing timely mTORC1 activation under methionine-sufficient conditions. In terms of tissue distribution, most abundant in skeletal muscle, followed by brain, liver and pancreas, with lower amounts in lung, kidney, placenta and heart. Expressed in the frontal lobe cortex as well as in the temporal, parietal, and occipital lobes. Expressed in most lung cancer cell lines tested.

It localises to the lysosome membrane. Functionally, catalytic component of the GATOR1 complex, a multiprotein complex that functions as an inhibitor of the amino acid-sensing branch of the mTORC1 pathway. In response to amino acid depletion, the GATOR1 complex has GTPase activating protein (GAP) activity and strongly increases GTP hydrolysis by RagA/RRAGA (or RagB/RRAGB) within heterodimeric Rag complexes, thereby turning them into their inactive GDP-bound form, releasing mTORC1 from lysosomal surface and inhibiting mTORC1 signaling. In the presence of abundant amino acids, the GATOR1 complex is ubiquitinated and inhibited by GATOR2. Within the GATOR1 complex, NPRL2 constitutes the catalytic subunit that mediates the GTPase activator activity and under methionine-sufficient conditions, the GTPase activator activity is inhibited by PRMT1 through methylation and consequently inducing timely mTORC1 activation. In terms of biological role, suppresses Src-dependent tyrosine phosphorylation and activation of PDPK1 and its downstream signaling. Down-regulates PDPK1 kinase activity by interfering with tyrosine phosphorylation at 'Tyr-9', 'Tyr-373' and 'Tyr-376' residues. May act as a tumor suppressor. Suppresses cell growth and enhances sensitivity to various anticancer drugs. The chain is GATOR1 complex protein NPRL2 from Homo sapiens (Human).